Consider the following 695-residue polypeptide: Calcium-dependent serine proteinase (695 aa).

The N-terminal stretch at 1 to 21 (MGKSSEAWCIVLFSVFASFSA) is a signal peptide. The region spanning 22–136 (EPTMHGEILS…TGFAAYYAAI (115 aa)) is the CUB 1 domain. 4 cysteine pairs are disulfide-bonded: Cys71–Cys89, Cys141–Cys153, Cys149–Cys162, and Cys164–Cys177. In terms of domain architecture, EGF-like; calcium-binding spans 137–178 (DVNECTDFTDVPCSHFCNNFIGGYFCSCPPEYFLHDDMRNCG). Asn155 bears the (3R)-3-hydroxyasparagine mark. Asn180 carries an N-linked (GlcNAc...) asparagine glycan. 6 disulfide bridges follow: Cys181-Cys208, Cys240-Cys257, Cys300-Cys347, Cys327-Cys360, Cys365-Cys410, and Cys392-Cys428. One can recognise a CUB 2 domain in the interval 181–296 (CSGNVFTALI…KGWKLRYHGD (116 aa)). 2 consecutive Sushi domains span residues 298 to 362 (IPCP…RCQP) and 363 to 430 (VDCG…KCVP). Asn413 carries an N-linked (GlcNAc...) asparagine glycan. Positions 445-687 (IFGGFPAKIQ…YKDWILQTMQ (243 aa)) constitute a Peptidase S1 domain. Residues His482 and Asp536 each act as charge relay system in the active site. 2 disulfides stabilise this stretch: Cys602–Cys625 and Cys634–Cys666. The active-site Charge relay system is Ser638.

It belongs to the peptidase S1 family. Heterodimer, consisting of heavy and light chains with disulfide bonds. The heavy chain is expected to be a regulatory subunit and the light chain contains the catalytic site. In terms of processing, the iron and 2-oxoglutarate dependent 3-hydroxylation of aspartate and asparagine is (R) stereospecific within EGF domains.

Its subcellular location is the secreted. It is found in the extracellular space. It localises to the extracellular matrix. Functionally, capable of degrading extracellular matrix proteins. CASP degrades type I and IV collagen and fibronectin in the presence of calcium. This chain is Calcium-dependent serine proteinase, found in Mesocricetus auratus (Golden hamster).